The following is a 467-amino-acid chain: Uronate isomerase (467 aa).

This sequence belongs to the metallo-dependent hydrolases superfamily. Uronate isomerase family.

It catalyses the reaction D-glucuronate = D-fructuronate. The enzyme catalyses aldehydo-D-galacturonate = keto-D-tagaturonate. It functions in the pathway carbohydrate metabolism; pentose and glucuronate interconversion. The polypeptide is Uronate isomerase (Haemophilus influenzae (strain PittGG)).